A 628-amino-acid chain; its full sequence is E3 SUMO-protein ligase PIAS3 (628 aa).

The interaction with CCAR2 stretch occupies residues 1–200 (MAELGELKHM…QLRFCLCETS (200 aa)). An SAP domain is found at 11–45 (VMSFRVSELQVLLGFAGRNKSGRKHELLAKALHLL). An LXXLL motif motif is present at residues 19–23 (LQVLL). Glycyl lysine isopeptide (Lys-Gly) (interchain with G-Cter in SUMO2) cross-links involve residues Lys46, Lys56, Lys230, and Lys307. The PINIT domain occupies 115–280 (MHPPLPQPVH…SLSVYLVRQL (166 aa)). The SP-RING-type zinc-finger motif lies at 312–393 (PDSEVATTSL…FMEILNSCSD (82 aa)). Positions 343, 345, 366, and 369 each coordinate Zn(2+). Residues 450–460 (LTIESSSDEED) form an SUMO1-binding region. Glycyl lysine isopeptide (Lys-Gly) (interchain with G-Cter in SUMO2) cross-links involve residues Lys466 and Lys482. The interval 571 to 628 (GPLAPTLGSSHRSSTPAPPPGRVSSIVAPGSSLREGHGGPLPSGPSLTGCRSDVISLD) is disordered.

This sequence belongs to the PIAS family. Monomer. Interacts with PLAG1 and ZFHX3. Interacts with STAT5A; the interaction occurs on stimulation by PRL. Binds SUMO1 and UBE2I. Interacts with AR, BCL11A, HMGA2, IRF1 and NCOA2. Interacts with MITF; the interaction inhibits the transcriptional activity of MITF. Interacts with STAT3; the interaction occurs on stimulation by IL6, CNTF or OSM and inhibits the DNA binding activity of STAT3. Interacts with GFI1; the interaction relieves the inhibitory effect of PIAS3 on STAT3-mediated transcriptional activity. Interacts with MTA1. Interacts with CCAR2 (via N-terminus). Interacts with TRIM8. Interacts with PRDM1. Sumoylated. Expressed in kidney, heart, spleen, brain and cerebellum; weak expression, if any, in liver and lung.

The protein resides in the cytoplasm. It localises to the nucleus. It is found in the nucleus speckle. Its pathway is protein modification; protein sumoylation. In terms of biological role, functions as an E3-type small ubiquitin-like modifier (SUMO) ligase, stabilizing the interaction between UBE2I and the substrate, and as a SUMO-tethering factor. Plays a crucial role as a transcriptional coregulation in various cellular pathways, including the STAT pathway and the steroid hormone signaling pathway. Repressor of STAT3 signaling via inhibiting STAT3 DNA-binding and suppressing cell growth. Repressor of MITF transcriptional activity. Enhances the sumoylation of MTA1 and may participate in its paralog-selective sumoylation. Sumoylates CCAR2 which promotes its interaction with SIRT1. Diminishes the sumoylation of ZFHX3 by preventing the colocalization of ZFHX3 with SUMO1 in the nucleus. This is E3 SUMO-protein ligase PIAS3 (Pias3) from Mus musculus (Mouse).